The chain runs to 291 residues: ATP synthase gamma chain (291 aa).

This sequence belongs to the ATPase gamma chain family. F-type ATPases have 2 components, CF(1) - the catalytic core - and CF(0) - the membrane proton channel. CF(1) has five subunits: alpha(3), beta(3), gamma(1), delta(1), epsilon(1). CF(0) has three main subunits: a, b and c.

The protein resides in the cell membrane. Its function is as follows. Produces ATP from ADP in the presence of a proton gradient across the membrane. The gamma chain is believed to be important in regulating ATPase activity and the flow of protons through the CF(0) complex. In Streptococcus equi subsp. zooepidemicus (strain MGCS10565), this protein is ATP synthase gamma chain.